We begin with the raw amino-acid sequence, 757 residues long: MDVNPTLLFLKVPAQNAISTTFPYTGDPPYSHGTGTGYTMDTVNRTHQYSEKGKWATNTETGAPQLNPIDGPLPEDNEPSGYAQTDCVLEAMAFLEESHPGIFENSCLETMEVVQQTRVDKLTQGRQTYDWTLNRNQPAATALANTIEVFRSNGLTANESGRLIDFLKDVMESMDKEEMEITTHFQRKRRVRDNMTKKMVTQRTIGKKKQRLNKRSYLIRALTLNTMTKDAERGKLKRRAIATPGMQIRGFVYFVETLARSICEKLEQSGLPVGGNEKKAKLANVVRKMMTNSQDTELSFTITGDNTKWNENQNPRMFLAMITYITRNQPEWFRNVLSIAPIMFSNKMARLGKGYMFESKSMKLRTQIPAEMLANIDLKYFNESTRKKIEKIRPLLIDGTASLSPGMMMGMFNMLSTVLGVSILNLGQKRYTKTTYWWDGLQSSDDFALIVNAPNHEGIQAGVDRFYRTCKLVGINMSKKKSYINRTGTFEFTSFFYRYGFVANFSMELPSFGVSGINESADMSIGVTVIKNNMINNDLGPATAQMALQLFIKDYRYTYRCHRGDTQIQTRRSFELKKLWEQTRSKAGLLVSDGGPNLYNIRNLHIPEVCLKWELMDEDYQGRLCNPLNPFVSHKEIESVNNAVVMPAHGPAKSMEYDAVATTHSWIPKRNRSILNTSQRGILEDEQMYQKCCNLFEKFFPSSSYRRPVGISSMVEAMVSRARIDARIDFESGRIKKEEFAEIMKICSTIEELRRQK.

The interval 53–82 (GKWATNTETGAPQLNPIDGPLPEDNEPSGY) is disordered. Short sequence motifs (nuclear localization signal) lie at residues 187–195 (RKRRVRDNM) and 203–216 (RTIGKKKQRLNKRS). Positions 249-256 (RGFVYFVE) are promoter-binding site. In terms of domain architecture, RdRp catalytic spans 286-483 (VRKMMTNSQD…GINMSKKKSY (198 aa)).

Belongs to the influenza viruses polymerase PB1 family. As to quaternary structure, influenza RNA polymerase is composed of three subunits: PB1, PB2 and PA. Interacts (via N-terminus) with PA (via C-terminus). Interacts (via C-terminus) with PB2 (via N-terminus); this interaction is essential for transcription initiation. Phosphorylated by host PRKCA.

It is found in the host nucleus. The protein resides in the host cytoplasm. The enzyme catalyses RNA(n) + a ribonucleoside 5'-triphosphate = RNA(n+1) + diphosphate. Its function is as follows. RNA-dependent RNA polymerase which is responsible for replication and transcription of virus RNA segments. The transcription of viral mRNAs occurs by a unique mechanism called cap-snatching. 5' methylated caps of cellular mRNAs are cleaved after 10-13 nucleotides by PA. In turn, these short capped RNAs are used as primers by PB1 for transcription of viral mRNAs. During virus replication, PB1 initiates RNA synthesis and copy vRNA into complementary RNA (cRNA) which in turn serves as a template for the production of more vRNAs. The protein is RNA-directed RNA polymerase catalytic subunit of Aves (Horse).